Here is a 79-residue protein sequence, read N- to C-terminus: Translational regulator CsrA (79 aa).

It belongs to the CsrA/RsmA family. In terms of assembly, homodimer; the beta-strands of each monomer intercalate to form a hydrophobic core, while the alpha-helices form wings that extend away from the core.

It is found in the cytoplasm. In terms of biological role, a translational regulator that binds mRNA to regulate translation initiation and/or mRNA stability. Usually binds in the 5'-UTR at or near the Shine-Dalgarno sequence preventing ribosome-binding, thus repressing translation. Its main target seems to be the major flagellin gene, while its function is anatagonized by FliW. The chain is Translational regulator CsrA from Geobacter sulfurreducens (strain ATCC 51573 / DSM 12127 / PCA).